Here is a 209-residue protein sequence, read N- to C-terminus: MSKQKHSASSGRWLKEHFDDKYANEARKKGYRSRAYFKMEEIQTKDKLLTPGMTIVDLGAAPGGWSQYAAKIIGDNGQIIACDLLPMDPIAGVSFLQGDFREEAVLDALLERIQPNMVDVVMSDMAPNIAGNNSVDQPRAMYLVELALDMCRQVLATNGSFVVKVFQGEGFDQYVKDVREMFKTVKVRKPDSSRARSREVFIVATGYKG.

S-adenosyl-L-methionine-binding residues include Gly63, Trp65, Asp83, Asp99, and Asp124. Lys164 serves as the catalytic Proton acceptor.

This sequence belongs to the class I-like SAM-binding methyltransferase superfamily. RNA methyltransferase RlmE family.

It is found in the cytoplasm. The catalysed reaction is uridine(2552) in 23S rRNA + S-adenosyl-L-methionine = 2'-O-methyluridine(2552) in 23S rRNA + S-adenosyl-L-homocysteine + H(+). In terms of biological role, specifically methylates the uridine in position 2552 of 23S rRNA at the 2'-O position of the ribose in the fully assembled 50S ribosomal subunit. This chain is Ribosomal RNA large subunit methyltransferase E, found in Vibrio atlanticus (strain LGP32) (Vibrio splendidus (strain Mel32)).